We begin with the raw amino-acid sequence, 86 residues long: Small ribosomal subunit protein uS17 (86 aa).

Belongs to the universal ribosomal protein uS17 family. In terms of assembly, part of the 30S ribosomal subunit.

In terms of biological role, one of the primary rRNA binding proteins, it binds specifically to the 5'-end of 16S ribosomal RNA. The polypeptide is Small ribosomal subunit protein uS17 (Roseiflexus castenholzii (strain DSM 13941 / HLO8)).